Here is an 887-residue protein sequence, read N- to C-terminus: Amyloid-beta-like protein (887 aa).

Residues Met-1–Ala-27 form the signal peptide. Residues Ala-28–Tyr-813 are Extracellular-facing. Residues Pro-30–Gln-133 are GFLD subdomain. The E1 domain maps to Pro-30–Lys-199. 6 disulfide bridges follow: Cys-40/Cys-70, Cys-81/Cys-128, Cys-106/Cys-116, Cys-143/Cys-197, Cys-154/Cys-184, and Cys-168/Cys-196. Positions Glu-141–Lys-199 are cuBD subdomain. N-linked (GlcNAc...) asparagine glycans are attached at residues Asn-150 and Asn-161. 2 disordered regions span residues Asn-225–Gln-365 and Asn-377–Ser-396. 2 N-linked (GlcNAc...) asparagine glycosylation sites follow: Asn-237 and Asn-240. Acidic residues predominate over residues Asn-246–Ala-267. Residues Asp-268–Asp-292 show a composition bias toward low complexity. Positions Ile-293–Ala-321 are enriched in acidic residues. The span at Ala-329–Lys-352 shows a compositional bias: low complexity. Residues Thr-395–Tyr-597 enclose the E2 domain. Asn-574 carries an N-linked (GlcNAc...) asparagine glycan. The tract at residues Lys-675–Ser-743 is disordered. The span at Gln-681–Gln-699 shows a compositional bias: low complexity. A helical membrane pass occupies residues Phe-814–Ala-834. Residues Lys-835–Glu-887 are Cytoplasmic-facing. Residues Tyr-875–Tyr-880 carry the YENPXY motif motif.

It belongs to the APP family. Interacts (via the intracellular domain, ICD) with APP-BP1. In terms of tissue distribution, expressed in postmitotic neurons in the central and peripheral nervous systems. Within the nervous system, transcripts are not observed in neuroblasts, newly generated neurons and at least one class of presumed glial cells.

Its subcellular location is the membrane. Its function is as follows. During development, plays a role in the regulation of the neddylation pathway. Appl and APP-BP1 interact antagonistically during development. This Drosophila melanogaster (Fruit fly) protein is Amyloid-beta-like protein (Appl).